A 73-amino-acid chain; its full sequence is MLSTSTLIGLTYAALAVLYLLVLPFLFLVYVDKRWNYSGAWEKVLMFFLVLFFFPGMVLVAPFMTFRPKPRSL.

The next 2 membrane-spanning stretches (helical) occupy residues 7-27 (LIGL…PFLF) and 44-64 (VLMF…APFM).

This sequence belongs to the complex I NdhL subunit family. In terms of assembly, NDH-1 can be composed of about 15 different subunits; different subcomplexes with different compositions have been identified which probably have different functions.

It localises to the cellular thylakoid membrane. The catalysed reaction is a plastoquinone + NADH + (n+1) H(+)(in) = a plastoquinol + NAD(+) + n H(+)(out). It carries out the reaction a plastoquinone + NADPH + (n+1) H(+)(in) = a plastoquinol + NADP(+) + n H(+)(out). In terms of biological role, NDH-1 shuttles electrons from an unknown electron donor, via FMN and iron-sulfur (Fe-S) centers, to quinones in the respiratory and/or the photosynthetic chain. The immediate electron acceptor for the enzyme in this species is believed to be plastoquinone. Couples the redox reaction to proton translocation, and thus conserves the redox energy in a proton gradient. Cyanobacterial NDH-1 also plays a role in inorganic carbon-concentration. In Synechococcus sp. (strain JA-3-3Ab) (Cyanobacteria bacterium Yellowstone A-Prime), this protein is NAD(P)H-quinone oxidoreductase subunit L.